The following is a 974-amino-acid chain: MSSKKYELDAAAFEDKPESHSDAEMTPQKPQRRQSVLSKAVSEHDERATGPATDLLPPSKGLTTEEAEELLKKYGRNELPEKKTPSWLIYVRGLWGPMPAALWIAIIIEFALENWPDGAILFAIQIANATIGWYETIKAGDAVAALKNSLKPTATVYRDSKWQQIDAAVLVPGDLVKLASGSAVPADCSINEGVIDVDEAALTGESLPVTMGPEHMPKMGSNVVRGEVEGTVQYTGSLTFFGKTAALLQSVESDLGNIHVILRRVMLALCAISFILCMCCFIYLLARFYETFRHALQFAVVVLVVSIPIALEIVVTTTLAVGSKHLSKHKIIVTKLSAIEMMSGVNMLCSDKTGTLTLNKMEIQEQCFTFEEGNDLKSTLVLAALAAKWREPPRDALDTMVLGAADLDECDNYQQLNFVPFDPTTKRTAATLVDRRSGEKFDVTKGAPHVILQMVYNQDEINDEVVDIIDSLAARGVRCLSVAKTDQQGRWHMAGILTFLDPPRPDTKDTIRRSKEYGVDVKMITGDHLLIAKEMCRMLDLDPNILTADKLPQIKDANDLPEDLGEKYGDMMLSVGGFAQVFPEHKFMIVETLRQRGYTCAMTGDGVNDAPALKRADVGIAVHGATDAARAAADMVLTEPGLSVVVEAMLVSREVFQRMLSFLTYRISATLQLVCFFFIACFSLTPKAYGSVDPNFQFFHLPVLMFMLITLLNDGCLMTIGYDHVIPSERPQKWNLPVVFVSASILAAVACGSSLMLLWIGLEGYSSQYYENSWFHRLGLAQLPQGKLVTMMYLKISISDFLTLFSSRTGGHFFFYVPPSPILFCGAIISLLVSTMAASFWHKSRPDNVLTEGLAWGQTNAEKLLPLWVWIYCIVWWFVQDVVKVLAHICMDAVDLFGCVSDASGSGPIKPYSDDMKVNGFEPVKKPAEKSTEKALNLSVSSGPHKALEGLREDTHVLNESTSPVNAFSPKVKK.

Over residues 1–23 the composition is skewed to basic and acidic residues; sequence MSSKKYELDAAAFEDKPESHSDA. The disordered stretch occupies residues 1-61; it reads MSSKKYELDA…ATDLLPPSKG (61 aa). Helical transmembrane passes span 93–112, 118–137, 265–286, and 295–321; these read GLWG…EFAL, GAIL…YETI, VMLA…YLLA, and ALQF…TLAV. The active-site 4-aspartylphosphate intermediate is D351. Helical transmembrane passes span 631-651, 662-684, 698-712, 738-761, 813-840, and 869-887; these read AAAD…AMLV, FLTY…CFSL, FFHL…ITLL, VVFV…LWIG, FFFY…AASF, and VWIY…KVLA. The tract at residues 952–974 is disordered; that stretch reads REDTHVLNESTSPVNAFSPKVKK.

It belongs to the cation transport ATPase (P-type) (TC 3.A.3) family. Type IIIA subfamily.

It localises to the membrane. The catalysed reaction is ATP + H2O + H(+)(in) = ADP + phosphate + 2 H(+)(out). The protein is Probable proton ATPase 1B (H1B) of Leishmania donovani.